Consider the following 437-residue polypeptide: Vasoactive intestinal polypeptide receptor 2 (437 aa).

Positions 1-22 are cleaved as a signal peptide; the sequence is MRASVVLTCYCWLLVRVSSIHP. At 23–123 the chain is on the extracellular side; sequence ECRFHLEIQE…EDESKISFYI (101 aa). 3 disulfides stabilise this stretch: C37/C60, C51/C92, and C74/C108. 3 N-linked (GlcNAc...) asparagine glycosylation sites follow: N57, N87, and N91. The helical transmembrane segment at 124-149 threads the bilayer; it reads LVKAIYTLGYSVSLMSLTTGSIIICL. Over 150–157 the chain is Cytoplasmic; the sequence is FRKLHCTR. A helical membrane pass occupies residues 158–179; the sequence is NYIHLNLFLSFMLRAISVLVKD. Residues 180 to 202 are Extracellular-facing; that stretch reads SVLYSSSGLLRCHDQPASWVGCK. C201 and C270 are joined by a disulfide. The helical transmembrane segment at 203-227 threads the bilayer; it reads LSLVFFQYCIMANFYWLLVEGLYLH. Over 228–238 the chain is Cytoplasmic; the sequence is TLLVAILPPSR. A helical membrane pass occupies residues 239-260; the sequence is CFLAYLLIGWGIPSVCIGAWTA. At 261 to 279 the chain is on the extracellular side; the sequence is TRLSLEDTGCWDTNDHSIP. The chain crosses the membrane as a helical span at residues 280–303; it reads WWVIRMPILISIVVNFALFISIVR. At 304 to 324 the chain is on the cytoplasmic side; it reads ILLQKLTSPDVGGNDQSQYKR. The chain crosses the membrane as a helical span at residues 325 to 345; sequence LAKSTLLLIPLFGVHYMVFAA. Over 346 to 353 the chain is Extracellular; that stretch reads FPIGISST. Residues 354-377 form a helical membrane-spanning segment; that stretch reads YQILFELCVGSFQGLVVAVLYCFL. Residues 378 to 437 lie on the Cytoplasmic side of the membrane; sequence NSEVQCELKRRWRGLCLTQAGSRDYRLHSWSMSRNGSESALQIHRGSRTQSFLQSETSVI.

Belongs to the G-protein coupled receptor 2 family. Interacts with ADCYAP1/PACAP (via N-terminal extracellular domain); activated by PACAP27 and CAPAC38 neuropeptides. Interacts with VIP; the interaction results in VIPR1 activation. As to expression, expressed at high levels in the MIN6 cells, at moderate levels in pancreatic islets, insulin-secreting cells, lung, brain, stomach, and colon, and at low levels in the heart.

It is found in the cell membrane. Its function is as follows. G protein-coupled receptor activated by the neuropeptides vasoactive intestinal peptide (VIP) and pituitary adenylate cyclase-activating polypeptide (ADCYAP1/PACAP). Binds VIP and both PACAP27 and PACAP38 bioactive peptides with the order of ligand affinity of VIP = PACAP38 &gt; PACAP27. Ligand binding causes a conformation change that triggers signaling via guanine nucleotide-binding proteins (G proteins) and modulates the activity of downstream effectors. Activates cAMP-dependent pathway. May be coupled to phospholipase C. The protein is Vasoactive intestinal polypeptide receptor 2 of Mus musculus (Mouse).